Here is a 137-residue protein sequence, read N- to C-terminus: Competence protein D (137 aa).

Its function is as follows. Involved in transformation (genetic competence for DNA uptake). This is Competence protein D (comD) from Haemophilus influenzae (strain ATCC 51907 / DSM 11121 / KW20 / Rd).